The primary structure comprises 270 residues: Glutamate racemase (270 aa).

Substrate-binding positions include 10-11 (DS) and 42-43 (YG). The active-site Proton donor/acceptor is Cys-74. 75 to 76 (NT) provides a ligand contact to substrate. Cys-189 acts as the Proton donor/acceptor in catalysis. 190-191 (TH) is a binding site for substrate.

Belongs to the aspartate/glutamate racemases family.

It carries out the reaction L-glutamate = D-glutamate. It functions in the pathway cell wall biogenesis; peptidoglycan biosynthesis. Its function is as follows. Provides the (R)-glutamate required for cell wall biosynthesis. The polypeptide is Glutamate racemase (Bartonella quintana (strain Toulouse) (Rochalimaea quintana)).